A 449-amino-acid polypeptide reads, in one-letter code: Phosphomethylpyrimidine synthase (449 aa).

Substrate-binding positions include N80, M109, Y138, H173, 193 to 195 (SRG), 234 to 237 (DSLR), and E273. H277 contacts Zn(2+). Y300 is a substrate binding site. H341 contributes to the Zn(2+) binding site. Residues C421, C424, and C429 each coordinate [4Fe-4S] cluster.

The protein belongs to the ThiC family. Homodimer. [4Fe-4S] cluster serves as cofactor.

The enzyme catalyses 5-amino-1-(5-phospho-beta-D-ribosyl)imidazole + S-adenosyl-L-methionine = 4-amino-2-methyl-5-(phosphooxymethyl)pyrimidine + CO + 5'-deoxyadenosine + formate + L-methionine + 3 H(+). It participates in cofactor biosynthesis; thiamine diphosphate biosynthesis. Catalyzes the synthesis of the hydroxymethylpyrimidine phosphate (HMP-P) moiety of thiamine from aminoimidazole ribotide (AIR) in a radical S-adenosyl-L-methionine (SAM)-dependent reaction. The chain is Phosphomethylpyrimidine synthase from Campylobacter hominis (strain ATCC BAA-381 / DSM 21671 / CCUG 45161 / LMG 19568 / NCTC 13146 / CH001A).